Reading from the N-terminus, the 461-residue chain is Cysteine--tRNA ligase (461 aa).

Cysteine 28 is a binding site for Zn(2+). Residues 30–40 (VTIYDLCHIGH) carry the 'HIGH' region motif. Zn(2+)-binding residues include cysteine 209, histidine 234, and glutamate 238. Residues 266 to 270 (KMSKS) carry the 'KMSKS' region motif. Residue lysine 269 participates in ATP binding.

This sequence belongs to the class-I aminoacyl-tRNA synthetase family. In terms of assembly, monomer. Requires Zn(2+) as cofactor.

Its subcellular location is the cytoplasm. The catalysed reaction is tRNA(Cys) + L-cysteine + ATP = L-cysteinyl-tRNA(Cys) + AMP + diphosphate. The polypeptide is Cysteine--tRNA ligase (Edwardsiella ictaluri (strain 93-146)).